The following is a 286-amino-acid chain: Ribosomal RNA small subunit methyltransferase A (286 aa).

S-adenosyl-L-methionine contacts are provided by N33, V35, G60, E81, D111, and N129.

Belongs to the class I-like SAM-binding methyltransferase superfamily. rRNA adenine N(6)-methyltransferase family. RsmA subfamily.

The protein resides in the cytoplasm. It carries out the reaction adenosine(1518)/adenosine(1519) in 16S rRNA + 4 S-adenosyl-L-methionine = N(6)-dimethyladenosine(1518)/N(6)-dimethyladenosine(1519) in 16S rRNA + 4 S-adenosyl-L-homocysteine + 4 H(+). Its function is as follows. Specifically dimethylates two adjacent adenosines (A1518 and A1519) in the loop of a conserved hairpin near the 3'-end of 16S rRNA in the 30S particle. May play a critical role in biogenesis of 30S subunits. The polypeptide is Ribosomal RNA small subunit methyltransferase A (Streptomyces coelicolor (strain ATCC BAA-471 / A3(2) / M145)).